A 298-amino-acid chain; its full sequence is Aclacinomycin methylesterase RdmC (298 aa).

The 254-residue stretch at 24-277 (PALLLVMGGN…LAEIPGMGHA (254 aa)) folds into the AB hydrolase-1 domain. Residues Ser102, Asp248, and His276 contribute to the active site.

The protein belongs to the AB hydrolase superfamily. Hydrolase RdmC family. As to quaternary structure, monomer.

It carries out the reaction aclacinomycin T + H2O = 15-demethylaclacinomycin T + methanol. The protein operates within antibiotic biosynthesis; aclacinomycin biosynthesis. Involved in the biosynthesis of the anthracycline aclacinomycin which is an aromatic polyketide antibiotic that exhibits high cytotoxicity and is widely applied in the chemotherapy of a variety of cancers. Catalyzes the removal of the methoxy group from the C-15 position of aclacinomycin T and A to yield 15-demethoxyaclacinomycin T and A, respectively. This is Aclacinomycin methylesterase RdmC (rdmC) from Streptomyces purpurascens.